The sequence spans 104 residues: Large ribosomal subunit protein uL24 (104 aa).

The protein belongs to the universal ribosomal protein uL24 family. As to quaternary structure, part of the 50S ribosomal subunit.

In terms of biological role, one of two assembly initiator proteins, it binds directly to the 5'-end of the 23S rRNA, where it nucleates assembly of the 50S subunit. Functionally, one of the proteins that surrounds the polypeptide exit tunnel on the outside of the subunit. The protein is Large ribosomal subunit protein uL24 of Serratia proteamaculans (strain 568).